We begin with the raw amino-acid sequence, 598 residues long: MDNKKIRNFAIIAHIDHGKSTLADRILEFTNTVSKRDLKEQHLDSMDLEKERGITIKLNAVQIRYNSYIFHLIDTPGHVDFTYEVSRSLAATEGALLLVDASQGIQAQTLANVYLALENNLEIIPIINKIDLPSANVDKVKAEIENTIGISAENAILISAKNGIGIEKVLEAIVNLIPPPQASDEKDPLKALVFDSYFDIYRGVIIFIRVVTGKISVGDTFKFMANNLKFSVIELGISSPNQVKKEALFAGEVGWVAASIRNAKDVEVGDTITLVENPAKSPLPGYKKLVPVMYTGFYPVDSQQYNLLKDSLEKISLSDSSIIYEPESSKALGFGFRIGFLGLLHMEILQERLEREFNLSIIATAPSVEFQITRTNGQVQIISNPSLFPEPNFISEIREPFILAKIFLPEEFLGQIMGLCQDKRGIYVDLEYIDDFRRRLIYKLPLVEVIFDFFDRLKSLSKGYASFEYEVIDYQVSKLQKLDILLNGQKIDALSMIVHKDFAYPKARDLTQKLKEIIPRHSFEVPVQAVIGSKVIARETIKAYRKDVTAKLYGGDVTRRKKLLEKQKAGKKRMKSFGVVDVPQEAFLAILKTNVNEK.

A tr-type G domain is found at 4–181 (KKIRNFAIIA…AIVNLIPPPQ (178 aa)). GTP-binding positions include 16–21 (DHGKST) and 128–131 (NKID).

The protein belongs to the TRAFAC class translation factor GTPase superfamily. Classic translation factor GTPase family. LepA subfamily.

The protein localises to the cell membrane. The catalysed reaction is GTP + H2O = GDP + phosphate + H(+). Functionally, required for accurate and efficient protein synthesis under certain stress conditions. May act as a fidelity factor of the translation reaction, by catalyzing a one-codon backward translocation of tRNAs on improperly translocated ribosomes. Back-translocation proceeds from a post-translocation (POST) complex to a pre-translocation (PRE) complex, thus giving elongation factor G a second chance to translocate the tRNAs correctly. Binds to ribosomes in a GTP-dependent manner. In Mesomycoplasma hyopneumoniae (strain 7448) (Mycoplasma hyopneumoniae), this protein is Elongation factor 4.